Here is a 161-residue protein sequence, read N- to C-terminus: Endoribonuclease YbeY (161 aa).

His121, His125, and His131 together coordinate Zn(2+).

It belongs to the endoribonuclease YbeY family. The cofactor is Zn(2+).

The protein resides in the cytoplasm. Functionally, single strand-specific metallo-endoribonuclease involved in late-stage 70S ribosome quality control and in maturation of the 3' terminus of the 16S rRNA. The protein is Endoribonuclease YbeY of Xanthomonas axonopodis pv. citri (strain 306).